Here is a 486-residue protein sequence, read N- to C-terminus: Zinc finger CCCH domain-containing protein 49 (486 aa).

The C3H1-type zinc-finger motif lies at 157 to 184; it reads RNRAHVCSFYVRGECTRGAECPYRHEMP. The RRM domain occupies 228 to 301; sequence RTLYIGGLDS…VRLKLMWGKP (74 aa). 2 disordered regions span residues 329 to 348 and 379 to 486; these read SQQQ…QQQP and LVES…NGMT. Low complexity-rich tracts occupy residues 389–407 and 415–430; these read PGPQ…GQSY and YHGG…YGGY. Pro residues predominate over residues 431 to 444; that stretch reads MPPPRMPYQQPPQY. Residues 445–486 show a composition bias toward low complexity; sequence PAYQPMLAPPAQSQASSLQQPAPATQQLGQGPQQQTTQNGMT.

In Oryza sativa subsp. japonica (Rice), this protein is Zinc finger CCCH domain-containing protein 49.